The following is a 408-amino-acid chain: MAEYKNIVLLKGLENMEDYQFRTVKSLLRKELKLTKKMQEDYDRIQLADWMEDKFPKDAGLDKLIKVCEHIKDLKDLAKKLKTEKAKVQEKKKGKCKTAGKKKGQDELSSSESLFINKESYKSVPSSKKKRKQITKTEGGKKKKLTQEQAQLPETSGTNIKKEEDCLQNPHKSPPTPSSSSSNKAPRRGTVPKEPSREEGHHQGPKQVMVLKVTEPFTYDFEETKRMFHATVATETEFFRVKVFDTALMSKFIPGKIIAISHYIGCNGFLEIYRASCVSDVNINPTMIISNTLSESAIATPKISYLLSQAKGTFVNGEFVVFKKSERHECICYGIGDDTGKMAVVVYGRLTNVRCEPGSKLRLVCFELTSTKDVCLLRSVRHSYMQVINEGKPLNPDSVRRNSLEPYF.

The Pyrin domain occupies 1–87; the sequence is MAEYKNIVLL…AKKLKTEKAK (87 aa). The tract at residues 84-208 is disordered; the sequence is EKAKVQEKKK…EGHHQGPKQV (125 aa). Residues 92–102 are compositionally biased toward basic residues; it reads KKGKCKTAGKK. Residues 150–159 show a composition bias toward polar residues; the sequence is AQLPETSGTN. In terms of domain architecture, HIN-200 spans 190–388; the sequence is TVPKEPSREE…SVRHSYMQVI (199 aa).

It belongs to the HIN-200 family. In terms of tissue distribution, constitutively expressed in the thymus, bone marrow and spleen. Isoform 1 and isoform 3 are present in liver (at protein level).

Its subcellular location is the nucleus. This chain is Interferon-activable protein 203 (Ifi203), found in Mus musculus (Mouse).